The chain runs to 110 residues: ORC1-type DNA replication protein 3 (110 aa).

8–12 (SGKSL) contributes to the ATP binding site.

Belongs to the CDC6/cdc18 family.

Functionally, involved in regulation of DNA replication. This Halobacterium salinarum (strain ATCC 700922 / JCM 11081 / NRC-1) (Halobacterium halobium) protein is ORC1-type DNA replication protein 3 (orc3).